The primary structure comprises 376 residues: Succinyl-diaminopimelate desuccinylase (376 aa).

Histidine 67 serves as a coordination point for Zn(2+). The active site involves aspartate 69. Residue aspartate 100 participates in Zn(2+) binding. Glutamate 134 functions as the Proton acceptor in the catalytic mechanism. 3 residues coordinate Zn(2+): glutamate 135, glutamate 163, and histidine 349.

This sequence belongs to the peptidase M20A family. DapE subfamily. Homodimer. The cofactor is Zn(2+). It depends on Co(2+) as a cofactor.

The catalysed reaction is N-succinyl-(2S,6S)-2,6-diaminopimelate + H2O = (2S,6S)-2,6-diaminopimelate + succinate. It participates in amino-acid biosynthesis; L-lysine biosynthesis via DAP pathway; LL-2,6-diaminopimelate from (S)-tetrahydrodipicolinate (succinylase route): step 3/3. Its function is as follows. Catalyzes the hydrolysis of N-succinyl-L,L-diaminopimelic acid (SDAP), forming succinate and LL-2,6-diaminopimelate (DAP), an intermediate involved in the bacterial biosynthesis of lysine and meso-diaminopimelic acid, an essential component of bacterial cell walls. This Shewanella woodyi (strain ATCC 51908 / MS32) protein is Succinyl-diaminopimelate desuccinylase.